The following is a 317-amino-acid chain: uncharacterized protein (317 aa).

The protein to M.avium MAV169.

This is an uncharacterized protein from Mycobacterium tuberculosis (strain CDC 1551 / Oshkosh).